The following is a 244-amino-acid chain: Lipoprotein-releasing system ATP-binding protein LolD (244 aa).

One can recognise an ABC transporter domain in the interval 19 to 244 (IRAEALAKTY…KLRELAPSAV (226 aa)). 55 to 62 (GASGAGKS) is an ATP binding site.

It belongs to the ABC transporter superfamily. Lipoprotein translocase (TC 3.A.1.125) family. The complex is composed of two ATP-binding proteins (LolD) and two transmembrane proteins (LolC and LolE).

The protein resides in the cell inner membrane. Functionally, part of the ABC transporter complex LolCDE involved in the translocation of mature outer membrane-directed lipoproteins, from the inner membrane to the periplasmic chaperone, LolA. Responsible for the formation of the LolA-lipoprotein complex in an ATP-dependent manner. In Xanthomonas euvesicatoria pv. vesicatoria (strain 85-10) (Xanthomonas campestris pv. vesicatoria), this protein is Lipoprotein-releasing system ATP-binding protein LolD.